The sequence spans 62 residues: Sec-independent protein translocase protein TatA (62 aa).

Residues 1 to 21 (MFGIGIPELLVIFVLILLVFG) form a helical membrane-spanning segment.

It belongs to the TatA/E family. In terms of assembly, the Tat system comprises two distinct complexes: a TatABC complex, containing multiple copies of TatA, TatB and TatC subunits, and a separate TatA complex, containing only TatA subunits. Substrates initially bind to the TatABC complex, which probably triggers association of the separate TatA complex to form the active translocon.

The protein localises to the cell inner membrane. Functionally, part of the twin-arginine translocation (Tat) system that transports large folded proteins containing a characteristic twin-arginine motif in their signal peptide across membranes. TatA could form the protein-conducting channel of the Tat system. The chain is Sec-independent protein translocase protein TatA from Oleidesulfovibrio alaskensis (strain ATCC BAA-1058 / DSM 17464 / G20) (Desulfovibrio alaskensis).